The chain runs to 569 residues: Proline--tRNA ligase (569 aa).

It belongs to the class-II aminoacyl-tRNA synthetase family. ProS type 1 subfamily. Homodimer.

It is found in the cytoplasm. It catalyses the reaction tRNA(Pro) + L-proline + ATP = L-prolyl-tRNA(Pro) + AMP + diphosphate. Its function is as follows. Catalyzes the attachment of proline to tRNA(Pro) in a two-step reaction: proline is first activated by ATP to form Pro-AMP and then transferred to the acceptor end of tRNA(Pro). As ProRS can inadvertently accommodate and process non-cognate amino acids such as alanine and cysteine, to avoid such errors it has two additional distinct editing activities against alanine. One activity is designated as 'pretransfer' editing and involves the tRNA(Pro)-independent hydrolysis of activated Ala-AMP. The other activity is designated 'posttransfer' editing and involves deacylation of mischarged Ala-tRNA(Pro). The misacylated Cys-tRNA(Pro) is not edited by ProRS. This is Proline--tRNA ligase from Campylobacter hominis (strain ATCC BAA-381 / DSM 21671 / CCUG 45161 / LMG 19568 / NCTC 13146 / CH001A).